The following is a 471-amino-acid chain: tRNA(Ile)-lysidine synthase (471 aa).

Ser27–Ser32 is an ATP binding site.

It belongs to the tRNA(Ile)-lysidine synthase family.

The protein localises to the cytoplasm. The enzyme catalyses cytidine(34) in tRNA(Ile2) + L-lysine + ATP = lysidine(34) in tRNA(Ile2) + AMP + diphosphate + H(+). Its function is as follows. Ligates lysine onto the cytidine present at position 34 of the AUA codon-specific tRNA(Ile) that contains the anticodon CAU, in an ATP-dependent manner. Cytidine is converted to lysidine, thus changing the amino acid specificity of the tRNA from methionine to isoleucine. The polypeptide is tRNA(Ile)-lysidine synthase (Dehalococcoides mccartyi (strain CBDB1)).